A 572-amino-acid polypeptide reads, in one-letter code: Proline--tRNA ligase (572 aa).

It belongs to the class-II aminoacyl-tRNA synthetase family. ProS type 1 subfamily. In terms of assembly, homodimer.

It localises to the cytoplasm. It carries out the reaction tRNA(Pro) + L-proline + ATP = L-prolyl-tRNA(Pro) + AMP + diphosphate. Functionally, catalyzes the attachment of proline to tRNA(Pro) in a two-step reaction: proline is first activated by ATP to form Pro-AMP and then transferred to the acceptor end of tRNA(Pro). As ProRS can inadvertently accommodate and process non-cognate amino acids such as alanine and cysteine, to avoid such errors it has two additional distinct editing activities against alanine. One activity is designated as 'pretransfer' editing and involves the tRNA(Pro)-independent hydrolysis of activated Ala-AMP. The other activity is designated 'posttransfer' editing and involves deacylation of mischarged Ala-tRNA(Pro). The misacylated Cys-tRNA(Pro) is not edited by ProRS. The protein is Proline--tRNA ligase of Yersinia enterocolitica serotype O:8 / biotype 1B (strain NCTC 13174 / 8081).